We begin with the raw amino-acid sequence, 599 residues long: Elongation factor 4 (599 aa).

Residues 2-184 (KHIRNFSIIA…RLVRDIPPPE (183 aa)) enclose the tr-type G domain. Residues 14 to 19 (DHGKST) and 131 to 134 (NKID) contribute to the GTP site.

It belongs to the TRAFAC class translation factor GTPase superfamily. Classic translation factor GTPase family. LepA subfamily.

It is found in the cell inner membrane. The catalysed reaction is GTP + H2O = GDP + phosphate + H(+). Required for accurate and efficient protein synthesis under certain stress conditions. May act as a fidelity factor of the translation reaction, by catalyzing a one-codon backward translocation of tRNAs on improperly translocated ribosomes. Back-translocation proceeds from a post-translocation (POST) complex to a pre-translocation (PRE) complex, thus giving elongation factor G a second chance to translocate the tRNAs correctly. Binds to ribosomes in a GTP-dependent manner. The protein is Elongation factor 4 of Erwinia tasmaniensis (strain DSM 17950 / CFBP 7177 / CIP 109463 / NCPPB 4357 / Et1/99).